Consider the following 1003-residue polypeptide: SWI/SNF-related matrix-associated actin-dependent regulator of chromatin subfamily A containing DEAD/H box 1 (1003 aa).

Disordered stretches follow at residues 15 to 130, 172 to 235, and 274 to 351; these read KKID…SKYK, GSSR…HFPD, and AKKE…EDYS. Basic and acidic residues-rich tracts occupy residues 172–188, 221–235, and 274–294; these read GSSR…DSSP, KQEA…HFPD, and AKKE…DNKS. A CUE domain is found at 221 to 264; that stretch reads KQEASVKKLQRHFPDLDKEELREVLQEHDWSFHEALEALKLFAE. Residues 295-311 show a composition bias toward low complexity; it reads SAKAKANQNSNKAMAQN. A compositionally biased stretch (basic and acidic residues) spans 321-333; sequence KYSENAKRDTRDL. The 169-residue stretch at 486–654 folds into the Helicase ATP-binding domain; it reads ALLHKHKVNM…MSLLNFVMPH (169 aa). Residue 499–506 participates in ATP binding; the sequence is DEMGLGKT. Residues 605 to 608 carry the DEGH box motif; the sequence is DEGH. Positions 835 to 997 constitute a Helicase C-terminal domain; it reads ILEKLLSDIK…TIPLDMATLL (163 aa).

Belongs to the SNF2/RAD54 helicase family.

The protein resides in the nucleus. The protein localises to the chromosome. The catalysed reaction is ATP + H2O = ADP + phosphate + H(+). In terms of biological role, DNA helicase that possesses intrinsic ATP-dependent nucleosome-remodeling activity and is both required for DNA repair and heterochromatin organization. Promotes DNA end resection of double-strand breaks (DSBs) following DNA damage: probably acts by weakening histone DNA interactions in nucleosomes flanking DSBs. Required for the restoration of heterochromatin organization after replication. The sequence is that of SWI/SNF-related matrix-associated actin-dependent regulator of chromatin subfamily A containing DEAD/H box 1 (smarcad1) from Xenopus tropicalis (Western clawed frog).